Reading from the N-terminus, the 364-residue chain is Endopolygalacturonase B (364 aa).

Residues Met-1–Ala-20 form the signal peptide. A propeptide spanning residues Ala-21–Arg-29 is cleaved from the precursor. Residues Cys-32 and Cys-47 are joined by a disulfide bond. A glycan (N-linked (GlcNAc...) asparagine) is linked at Asn-138. 6 PbH1 repeats span residues Ser-159–Ser-188, Ser-189–Ser-210, Gly-211–Ser-231, Val-240–Thr-261, Val-269–Gln-291, and Thr-303–Gly-348. The active-site Proton donor is Asp-203. A disulfide bond links Cys-205 and Cys-221. Residue His-225 is part of the active site. 2 cysteine pairs are disulfide-bonded: Cys-331–Cys-336 and Cys-355–Cys-364.

Belongs to the glycosyl hydrolase 28 family.

It is found in the secreted. It carries out the reaction (1,4-alpha-D-galacturonosyl)n+m + H2O = (1,4-alpha-D-galacturonosyl)n + (1,4-alpha-D-galacturonosyl)m.. In terms of biological role, involved in maceration and soft-rotting of plant tissue. Hydrolyzes the 1,4-alpha glycosidic bonds of de-esterified pectate in the smooth region of the plant cell wall. The protein is Endopolygalacturonase B (pgaB) of Emericella nidulans (strain FGSC A4 / ATCC 38163 / CBS 112.46 / NRRL 194 / M139) (Aspergillus nidulans).